Here is a 295-residue protein sequence, read N- to C-terminus: (R)-3-hydroxydecanoyl-ACP:CoA transacylase (295 aa).

Positions 28–254 (NTIILINGSL…VIRDAGHFLD (227 aa)) constitute an AB hydrolase-1 domain.

It functions in the pathway polyester biosynthesis; polyhydroxyalkanoate biosynthesis. Functionally, catalyzes the transfer of the acyl moiety from in vitro synthesized 3-hydroxydecanoyl-CoA to acyl carrier protein. The protein is (R)-3-hydroxydecanoyl-ACP:CoA transacylase (phaG) of Pseudomonas putida (strain ATCC 47054 / DSM 6125 / CFBP 8728 / NCIMB 11950 / KT2440).